The sequence spans 238 residues: MRPHGRARDAMREIKLEAGVSVYAEGSCLARFGGTHVLCTASIEESVPPWMRGGGKGWVTAEYGMLPRATHTRSRREATAGKQSGRTQEIQRLIGRSLRAVVDLKALGERQITIDCDVLQADGGTRTAAITGAWVALKQATGYLIEEGLLTSDPVHGQLAAISCGVIDGETRLDLEYEEDRRAEADANFVLTDTGGIVEIQATAEDKPIPETDFDLLFALAKAGVVDLCEAQLAALKG.

Residues Arg86 and 124 to 126 each bind phosphate; that span reads GTR.

The protein belongs to the RNase PH family. Homohexameric ring arranged as a trimer of dimers.

The catalysed reaction is tRNA(n+1) + phosphate = tRNA(n) + a ribonucleoside 5'-diphosphate. Its function is as follows. Phosphorolytic 3'-5' exoribonuclease that plays an important role in tRNA 3'-end maturation. Removes nucleotide residues following the 3'-CCA terminus of tRNAs; can also add nucleotides to the ends of RNA molecules by using nucleoside diphosphates as substrates, but this may not be physiologically important. Probably plays a role in initiation of 16S rRNA degradation (leading to ribosome degradation) during starvation. This is Ribonuclease PH from Maricaulis maris (strain MCS10) (Caulobacter maris).